The chain runs to 413 residues: L-methionine gamma-lyase (413 aa).

Residues 75–77 (YGR) and 105–106 (GM) contribute to the pyridoxal 5'-phosphate site. Tyr131 serves as a coordination point for substrate. 218–220 (SAT) provides a ligand contact to pyridoxal 5'-phosphate. Lys221 carries the N6-(pyridoxal phosphate)lysine modification. Arg365 is a substrate binding site. A disordered region spans residues 388–413 (RLPETAGAGREPSRTALRLPERAADR).

It belongs to the trans-sulfuration enzymes family. As to quaternary structure, homotetramer; dimer of active dimers. It depends on pyridoxal 5'-phosphate as a cofactor.

The enzyme catalyses L-methionine + H2O = methanethiol + 2-oxobutanoate + NH4(+). It catalyses the reaction L-homocysteine + H2O = 2-oxobutanoate + hydrogen sulfide + NH4(+) + H(+). The catalysed reaction is L-cysteine + H2O = hydrogen sulfide + pyruvate + NH4(+) + H(+). Functionally, catalyzes the alpha,gamma-elimination of L-methionine to produce methanethiol, 2-oxobutanoate and ammonia. Is probably involved in L-methionine catabolism. Is also able to catalyze the alpha,gamma-elimination of L-homocysteine, and, to a lesser extent, the alpha,beta-elimination of L-cysteine. This Streptomyces avermitilis (strain ATCC 31267 / DSM 46492 / JCM 5070 / NBRC 14893 / NCIMB 12804 / NRRL 8165 / MA-4680) protein is L-methionine gamma-lyase.